The sequence spans 476 residues: Deoxyguanosinetriphosphate triphosphohydrolase-like protein 2 (476 aa).

A disordered region spans residues 1-20 (MYTDADRSREVVPEKDGHDK). The HD domain maps to 60–233 (RLTHSLEVAQ…MDLADDIAYS (174 aa)).

Belongs to the dGTPase family. Type 2 subfamily.

This Mesorhizobium japonicum (strain LMG 29417 / CECT 9101 / MAFF 303099) (Mesorhizobium loti (strain MAFF 303099)) protein is Deoxyguanosinetriphosphate triphosphohydrolase-like protein 2.